A 325-amino-acid chain; its full sequence is Small ribosomal subunit protein uS3 (325 aa).

The KH type-2 domain maps to 38–106 (IRKMMSKGME…QVQLNILEVK (69 aa)). The tract at residues 217 to 325 (EALLRQQRRE…AQGAPEKAEG (109 aa)) is disordered. The span at 222-232 (QQRRERPRRGP) shows a compositional bias: basic residues. A compositionally biased stretch (low complexity) spans 285–316 (TESAAVEGTPVETPAVTPETTAAPAAVTTAEA).

It belongs to the universal ribosomal protein uS3 family. As to quaternary structure, part of the 30S ribosomal subunit. Forms a tight complex with proteins S10 and S14.

Binds the lower part of the 30S subunit head. Binds mRNA in the 70S ribosome, positioning it for translation. This is Small ribosomal subunit protein uS3 from Parafrankia sp. (strain EAN1pec).